The following is a 962-amino-acid chain: Translation initiation factor IF-2 (962 aa).

Disordered regions lie at residues 122–263 (EVGV…EPAR), 293–327 (TEEV…TRRK), and 341–362 (IAAQ…AKEP). Over residues 156 to 173 (AVEPQTVVPPVAAPAAEV) the composition is skewed to low complexity. Basic and acidic residues predominate over residues 188 to 202 (KPPEEKETKVKHAEP). Residues 244–256 (RPKKAKKRRRKKV) show a composition bias toward basic residues. 2 stretches are compositionally biased toward basic and acidic residues: residues 308 to 327 (RPEE…TRRK) and 344 to 362 (QDDR…AKEP). The region spanning 455–624 (RRPPVITVMG…LLQAELLELK (170 aa)) is the tr-type G domain. Residues 464 to 471 (GHVDHGKT) form a G1 region. 464 to 471 (GHVDHGKT) serves as a coordination point for GTP. The segment at 489–493 (GITQH) is G2. The interval 510 to 513 (DTPG) is G3. GTP contacts are provided by residues 510-514 (DTPGH) and 564-567 (NKVD). The segment at 564–567 (NKVD) is G4. The tract at residues 600 to 602 (SAK) is G5.

This sequence belongs to the TRAFAC class translation factor GTPase superfamily. Classic translation factor GTPase family. IF-2 subfamily.

It localises to the cytoplasm. Its function is as follows. One of the essential components for the initiation of protein synthesis. Protects formylmethionyl-tRNA from spontaneous hydrolysis and promotes its binding to the 30S ribosomal subunits. Also involved in the hydrolysis of GTP during the formation of the 70S ribosomal complex. The sequence is that of Translation initiation factor IF-2 from Syntrophobacter fumaroxidans (strain DSM 10017 / MPOB).